We begin with the raw amino-acid sequence, 184 residues long: UPF0301 protein Rsph17029_2659 (184 aa).

Belongs to the UPF0301 (AlgH) family.

The sequence is that of UPF0301 protein Rsph17029_2659 from Cereibacter sphaeroides (strain ATCC 17029 / ATH 2.4.9) (Rhodobacter sphaeroides).